Consider the following 261-residue polypeptide: Transmembrane protein 106A (261 aa).

Positions 1–23 are disordered; it reads MGKAVSQLTSRKDEDKPILPDNP. The helical transmembrane segment at 93–113 threads the bilayer; it reads LFVFLSVAICLLIFSLTIFFL.

Belongs to the TMEM106 family. As to expression, expressed in liver, spleen, lung, kidney, lymph nodes and adipose tissue (at protein level). Expressed by macrophages.

The protein resides in the cell membrane. Activates macrophages and polarizes them into M1-like macrophages through the activation of the MAPK and NF-kappaB signaling pathway. Upon activation, up-regulates the expression of CD80, CD86, CD69 and MHC II on macrophages, and induces the release of pro-inflammatory cytokines such as TNF, IL1B, IL6, CCL2 and nitric oxide. May play a role in inhibition of proliferation and migration. The polypeptide is Transmembrane protein 106A (Tmem106a) (Mus musculus (Mouse)).